We begin with the raw amino-acid sequence, 283 residues long: Pantothenate synthetase (283 aa).

An ATP-binding site is contributed by 34 to 41 (MGALHDGH). H41 serves as the catalytic Proton donor. Q65 is a binding site for (R)-pantoate. Q65 is a beta-alanine binding site. Position 152–155 (152–155 (GQKD)) interacts with ATP. A (R)-pantoate-binding site is contributed by Q158. ATP-binding positions include V181 and 189-192 (MSSR).

It belongs to the pantothenate synthetase family. As to quaternary structure, homodimer.

Its subcellular location is the cytoplasm. The catalysed reaction is (R)-pantoate + beta-alanine + ATP = (R)-pantothenate + AMP + diphosphate + H(+). Its pathway is cofactor biosynthesis; (R)-pantothenate biosynthesis; (R)-pantothenate from (R)-pantoate and beta-alanine: step 1/1. Its function is as follows. Catalyzes the condensation of pantoate with beta-alanine in an ATP-dependent reaction via a pantoyl-adenylate intermediate. The protein is Pantothenate synthetase of Nitrobacter hamburgensis (strain DSM 10229 / NCIMB 13809 / X14).